Consider the following 701-residue polypeptide: Elongation factor G (701 aa).

The tr-type G domain occupies 8–290 (KRYRNIGICA…AVIEFLPAPD (283 aa)). GTP-binding positions include 17–24 (AHVDAGKT), 88–92 (DTPGH), and 142–145 (NKMD).

This sequence belongs to the TRAFAC class translation factor GTPase superfamily. Classic translation factor GTPase family. EF-G/EF-2 subfamily.

It is found in the cytoplasm. In terms of biological role, catalyzes the GTP-dependent ribosomal translocation step during translation elongation. During this step, the ribosome changes from the pre-translocational (PRE) to the post-translocational (POST) state as the newly formed A-site-bound peptidyl-tRNA and P-site-bound deacylated tRNA move to the P and E sites, respectively. Catalyzes the coordinated movement of the two tRNA molecules, the mRNA and conformational changes in the ribosome. The sequence is that of Elongation factor G from Marinobacter nauticus (strain ATCC 700491 / DSM 11845 / VT8) (Marinobacter aquaeolei).